The primary structure comprises 267 residues: Tryptophan synthase alpha chain (267 aa).

Catalysis depends on proton acceptor residues Glu-49 and Asp-60.

The protein belongs to the TrpA family. Tetramer of two alpha and two beta chains.

The enzyme catalyses (1S,2R)-1-C-(indol-3-yl)glycerol 3-phosphate + L-serine = D-glyceraldehyde 3-phosphate + L-tryptophan + H2O. Its pathway is amino-acid biosynthesis; L-tryptophan biosynthesis; L-tryptophan from chorismate: step 5/5. In terms of biological role, the alpha subunit is responsible for the aldol cleavage of indoleglycerol phosphate to indole and glyceraldehyde 3-phosphate. This chain is Tryptophan synthase alpha chain, found in Solibacter usitatus (strain Ellin6076).